The following is a 365-amino-acid chain: NADH-quinone oxidoreductase subunit D (365 aa).

This sequence belongs to the complex I 49 kDa subunit family. In terms of assembly, NDH-1 is composed of 14 different subunits. Subunits NuoB, C, D, E, F, and G constitute the peripheral sector of the complex.

The protein resides in the cell membrane. It carries out the reaction a quinone + NADH + 5 H(+)(in) = a quinol + NAD(+) + 4 H(+)(out). In terms of biological role, NDH-1 shuttles electrons from NADH, via FMN and iron-sulfur (Fe-S) centers, to quinones in the respiratory chain. The immediate electron acceptor for the enzyme in this species is believed to be a menaquinone. Couples the redox reaction to proton translocation (for every two electrons transferred, four hydrogen ions are translocated across the cytoplasmic membrane), and thus conserves the redox energy in a proton gradient. This Carboxydothermus hydrogenoformans (strain ATCC BAA-161 / DSM 6008 / Z-2901) protein is NADH-quinone oxidoreductase subunit D.